The primary structure comprises 121 residues: Large ribosomal subunit protein bL12 (121 aa).

This sequence belongs to the bacterial ribosomal protein bL12 family. As to quaternary structure, homodimer. Part of the ribosomal stalk of the 50S ribosomal subunit. Forms a multimeric L10(L12)X complex, where L10 forms an elongated spine to which 2 to 4 L12 dimers bind in a sequential fashion. Binds GTP-bound translation factors.

Forms part of the ribosomal stalk which helps the ribosome interact with GTP-bound translation factors. Is thus essential for accurate translation. In Clostridium beijerinckii (strain ATCC 51743 / NCIMB 8052) (Clostridium acetobutylicum), this protein is Large ribosomal subunit protein bL12.